Reading from the N-terminus, the 474-residue chain is tRNA-2-methylthio-N(6)-dimethylallyladenosine synthase (474 aa).

The region spanning 3-120 is the MTTase N-terminal domain; that stretch reads KKLHIKTWGC…LPEMINSVRG (118 aa). Residues Cys-12, Cys-49, Cys-83, Cys-157, Cys-161, and Cys-164 each coordinate [4Fe-4S] cluster. The Radical SAM core domain occupies 143–375; the sequence is RAEGPTAFVS…QERINQQAMA (233 aa). The 64-residue stretch at 378–441 folds into the TRAM domain; it reads RRMLGTTQRI…PNSLRGKVVR (64 aa).

It belongs to the methylthiotransferase family. MiaB subfamily. Monomer. [4Fe-4S] cluster serves as cofactor.

The protein localises to the cytoplasm. The catalysed reaction is N(6)-dimethylallyladenosine(37) in tRNA + (sulfur carrier)-SH + AH2 + 2 S-adenosyl-L-methionine = 2-methylsulfanyl-N(6)-dimethylallyladenosine(37) in tRNA + (sulfur carrier)-H + 5'-deoxyadenosine + L-methionine + A + S-adenosyl-L-homocysteine + 2 H(+). In terms of biological role, catalyzes the methylthiolation of N6-(dimethylallyl)adenosine (i(6)A), leading to the formation of 2-methylthio-N6-(dimethylallyl)adenosine (ms(2)i(6)A) at position 37 in tRNAs that read codons beginning with uridine. This is tRNA-2-methylthio-N(6)-dimethylallyladenosine synthase from Shigella boydii serotype 18 (strain CDC 3083-94 / BS512).